The sequence spans 151 residues: Small ribosomal subunit protein uS15z (151 aa).

Belongs to the universal ribosomal protein uS15 family.

The protein is Small ribosomal subunit protein uS15z (RPS13A) of Arabidopsis thaliana (Mouse-ear cress).